The primary structure comprises 659 residues: Pentatricopeptide repeat-containing protein At3g48810 (659 aa).

PPR repeat units lie at residues T75–C109, S110–P144, S145–P179, N180–P214, D215–E243, V245–P279, N280–P314, N315–P350, N351–P385, N386–P420, N421–P455, S456–P490, N492–W526, S527–P561, D562–P598, and D599–P633.

It belongs to the PPR family. P subfamily.

The chain is Pentatricopeptide repeat-containing protein At3g48810 from Arabidopsis thaliana (Mouse-ear cress).